A 288-amino-acid polypeptide reads, in one-letter code: Quinate/shikimate dehydrogenase (288 aa).

Residues lysine 71 and aspartate 107 each contribute to the substrate site. Residues 132-135, 155-158, lysine 205, 232-235, and glycine 255 contribute to the NAD(+) site; these read AGGA, NRRD, and CVYN.

The protein belongs to the shikimate dehydrogenase family. In terms of assembly, homodimer.

It catalyses the reaction L-quinate + NAD(+) = 3-dehydroquinate + NADH + H(+). The enzyme catalyses L-quinate + NADP(+) = 3-dehydroquinate + NADPH + H(+). It carries out the reaction shikimate + NADP(+) = 3-dehydroshikimate + NADPH + H(+). The catalysed reaction is shikimate + NAD(+) = 3-dehydroshikimate + NADH + H(+). It participates in metabolic intermediate biosynthesis; chorismate biosynthesis; chorismate from D-erythrose 4-phosphate and phosphoenolpyruvate: step 4/7. Its function is as follows. The actual biological function of YdiB remains unclear, nor is it known whether 3-dehydroshikimate or quinate represents the natural substrate. Catalyzes the reversible NAD-dependent reduction of both 3-dehydroshikimate (DHSA) and 3-dehydroquinate to yield shikimate (SA) and quinate, respectively. It can use both NAD or NADP for catalysis, however it has higher catalytic efficiency with NAD. The chain is Quinate/shikimate dehydrogenase from Escherichia coli O139:H28 (strain E24377A / ETEC).